A 322-amino-acid polypeptide reads, in one-letter code: MEGISNFKTPSKLSEKKKSVLCSTPTINIPASPFMQKLGFGTGVNVYLMKRSPRGLSHSPWAVKKINPICNDHYRSVYQKRLMDEAKILKSLHHPNIVGYRAFTEANDGSLCLAMEYGGEKSLNDLIEERYKASQDPFPAAIILKVALNMARGLKYLHQEKKLLHGDIKSSNVVIKGDFETIKICDVGVSLPLDENMTVTDPEACYIGTEPWKPKEAVEENGVITDKADIFAFGLTLWEMMTLSIPHINLSNDDDDEDKTFDESDFDDEAYYAALGTRPPINMEELDESYQKVIELFSVCTNEDPKDRPSAAHIVEALETDV.

M1 carries the N-acetylmethionine modification. A phosphothreonine mark is found at T9 and T24. At S32 the chain carries Phosphoserine. The 291-residue stretch at 32 to 322 (SPFMQKLGFG…HIVEALETDV (291 aa)) folds into the Protein kinase domain. ATP is bound at residue 38-46 (LGFGTGVNV). A Phosphoserine modification is found at S59. K64 is a binding site for ATP. D167 (proton acceptor) is an active-site residue. K169 is covalently cross-linked (Glycyl lysine isopeptide (Lys-Gly) (interchain with G-Cter in SUMO2)). The tract at residues 320-322 (TDV) is PDZ-interaction.

Belongs to the protein kinase superfamily. STE Ser/Thr protein kinase family. MAP kinase kinase subfamily. In terms of assembly, interacts with DLG1 and TP53. Phosphorylated; in a cell-cycle dependent manner at mitosis. As to expression, expressed in the testis and placenta. In the testis, restrictedly expressed in outer cell layer of seminiferous tubules.

The catalysed reaction is L-seryl-[protein] + ATP = O-phospho-L-seryl-[protein] + ADP + H(+). It carries out the reaction L-threonyl-[protein] + ATP = O-phospho-L-threonyl-[protein] + ADP + H(+). The enzyme catalyses L-tyrosyl-[protein] + ATP = O-phospho-L-tyrosyl-[protein] + ADP + H(+). Its activity is regulated as follows. Activated by phosphorylation. Its function is as follows. Phosphorylates MAP kinase p38. Seems to be active only in mitosis. May also play a role in the activation of lymphoid cells. When phosphorylated, forms a complex with TP53, leading to TP53 destabilization and attenuation of G2/M checkpoint during doxorubicin-induced DNA damage. The sequence is that of Lymphokine-activated killer T-cell-originated protein kinase (PBK) from Homo sapiens (Human).